Consider the following 165-residue polypeptide: V-type proton ATPase 16 kDa proteolipid subunit (165 aa).

Topologically, residues 1-10 (MSSTFSGDET) are lumenal. A helical membrane pass occupies residues 11–33 (APFFGFLGAAAALVFSCMGAAYG). Topologically, residues 34 to 55 (TAKSGVGVASMGVMRPELVMKS) are cytoplasmic. The chain crosses the membrane as a helical span at residues 56 to 76 (IVPVVMAGVLGIYGLIIAVII). Over 77–95 (STGINPKAKSYYLFDGYAH) the chain is Lumenal. A helical membrane pass occupies residues 96–117 (LSSGLACGLAGLSAGMAIGIVG). Residues 118-129 (DAGVRANAQQPK) are Cytoplasmic-facing. The chain crosses the membrane as a helical span at residues 130 to 155 (LFVGMILILIFAEALALYGLIVGIIL). Over 156–165 (SSRAGQSRAD) the chain is Lumenal.

Belongs to the V-ATPase proteolipid subunit family. In terms of assembly, V-ATPase is a heteromultimeric enzyme composed of a peripheral catalytic V1 complex (main components: subunits A, B, C, D, E, and F) attached to an integral membrane V0 proton pore complex (main component: the proteolipid protein; which is present as a hexamer that forms the proton-conducting pore). Higher expression in leaves, followed by roots and weakly in flowers. Expression in leaves is light-dependent.

The protein resides in the vacuole membrane. Functionally, proton-conducting pore forming subunit of the membrane integral V0 complex of vacuolar ATPase. V-ATPase is responsible for acidifying a variety of intracellular compartments in eukaryotic cells. Necessary for the crassulacean acid metabolism. This Kalanchoe daigremontiana (Devil's backbone) protein is V-type proton ATPase 16 kDa proteolipid subunit.